The sequence spans 344 residues: Outer membrane protein assembly factor BamC (344 aa).

The first 24 residues, 1–24, serve as a signal peptide directing secretion; it reads MAYSVQKSRLAKVAGVSLVLLLAA. C25 carries N-palmitoyl cysteine lipidation. C25 carries S-diacylglycerol cysteine lipidation.

The protein belongs to the BamC family. Part of the Bam complex, which is composed of the outer membrane protein BamA, and four lipoproteins BamB, BamC, BamD and BamE. Forms a subcomplex with BamD and BamE. The Bam complex has the shape of a hat, with the BamA beta-barrel crown in the outer membrane and the periplasmic brim formed by the BamA POTRA domains and the 4 lipoproteins.

Its subcellular location is the cell outer membrane. Its function is as follows. Part of the outer membrane protein assembly complex (Bam), which is involved in assembly and insertion of beta-barrel proteins into the outer membrane. Nonessential member of the complex that stabilizes the interaction between the essential proteins BamA and BamD. Efficient substrate folding and insertion into the outer membrane requires all 5 subunits. A lateral gate may open between the first and last strands of the BamA beta-barrel that allows substrate to insert into the outer membrane; comparison of the structures of complete and nearly complete Bam complexes show there is considerable movement of all 5 proteins. The protein is Outer membrane protein assembly factor BamC of Escherichia coli (strain K12).